The chain runs to 319 residues: Protease HtpX homolog (319 aa).

Helical transmembrane passes span 3–23 and 32–52; these read LTVL…AWAL and TGVA…QWLF. H134 lines the Zn(2+) pocket. The active site involves E135. H138 contacts Zn(2+). The next 2 membrane-spanning stretches (helical) occupy residues 146–166 and 182–202; these read VILA…TLVW and MALV…QLIV. E210 provides a ligand contact to Zn(2+).

It belongs to the peptidase M48B family. The cofactor is Zn(2+).

Its subcellular location is the cell membrane. The polypeptide is Protease HtpX homolog (Aeropyrum pernix (strain ATCC 700893 / DSM 11879 / JCM 9820 / NBRC 100138 / K1)).